The chain runs to 5098 residues: MADDLANLCRFLFDDTAFPSLSSSASSDLFSRRLRSDDSIKRGLRSFYLLLRWGVAPIGGDDADSSGKLRFETWSDSQLQALVSISQAILLLSRSLLGTDLTLNQGLVDQLEPIVLGVIQEVMEFSLSFLEKSSFRQNDLKMEINMEILLEIASFDGSEKQYDILPDFSPAEVAELWPAFSGEHDNMDAQSLVKCTFQGGRCSNEEKPVDRLLITLMSECIESDVQAQSVVKSPFQQDCGDLNPFTRHLAVVHLRCVCRLIMVCKELVQLPNMLDEKTVDQAVLDKLSFCLRILKLLGSLSKDVQSIENDGSLLQAVASFTDAFPKLFRVFFEFTNHTATEGNIESLSLALVEGFLNLVQLIFGKSSVFQNVQACVAASIVSNLDSSVWRYDGSSCNLTPPLAYFPRSVIYTLKLIQDLKRQPYHIHDLRVLESEVTYEDVSSTVDSVYFHLRQEKIPLLKCFTVEDIMRVIFPSSSQWMDNFFHLVYFLHREGVKLRPKVERTYSSLRSNSFAEVESQISHDDEALFGNLFSEGSRSLCSIEPNDQPPVSVSSNLLLQAAKELLNFLRACILCQEWVPSIYEDGCKKLDTGHIDILLNIVGCSIEDKASDGGCMLQDEGRPGHVAFELLLNLLRSRALSDFLESYLFQQILVVENSDFNYNDKTLALLAHTLLCRPGLAGAQLRAKIYDGFVSFVTERARGICAEALSLKELTACLPSAFHIEILLMAFHLSNEAEKAKFSNLIASCLHKVDTPAGICDGPQLSSWAMLISRLLVLLHHMLLHPNTCPTSLMLDLRSKLREVRSCGSNLHVTVGDHLSSWASLVARGITDSWAEDESVSHLMSQMIDFSPHPPTFQNDVSTAKTLNLDYGDLSASLCRVLGLWKGKKAGKVEDLLVERYIFMLSSDIARINCALDSQPSLHVNYQNVDISNSVDLISTSHLLVGDINVVGRNIELRNILIGVLNQLQAAPEQVVEDLGWDYIREGAWLSLLLYFLDGGVWDYCNKNSCSEIDPFWKECTSVDAKYVAAAEGVVSYLMKTGDIAELLRMLSSLVGKYLRVYKKAFLATFSDWNHHGHSSPSLLLLKHTQFGKSLQGEYAKIGDNSLHLQCIFYLSKLDSLGDGRGSGVLWKVFWEFMVHGFPTSLQTSSAILLSCILSIRCIVLTINGLLKLGNSKEKFGVDTSVLHQLLDSIMIIKFDQVFESFHGKCEEIHQNICAVLQLPDLTELFLMKDMEGFVRDISAEQIDRSQVLEGVITKIVDVMDSLSKDSSKSDIFKFYLGVDAVSEHTREFYELQRGDLSVFIDSLDYCSLEPVNIKVLNFLVDLLSVAQSPDLRRRVQQKFIDMDLISLSGWLERRLLGSFVEEIDGKKTAKGNSLPFREAAMNFINCLVSSTNDLQTRELQNHLFEALLISLDTAFLSFDIHMSMSYFHFVLQLAREDNLMKMVLKRTIMLMEKLAAEEKLLPGLKFIFGVIGTLLSNRSPSHGESLCGKSLASYKNTATGPLVPKLSGTTKKSDTLALPVDQEGSSISLECDVTSVDEDEDDGTSDGEVASLDKEDEEDANSERYLASKVCTFTSSGSNFMEQHWYFCYTCDLTVSKGCCSVCAKVCHRGHRVVYSRSSRFFCDCGAGGVRGSSCQCLKPRKYNGNGSAPARGTNNFQSFLPLSEDADQLGESDSDVEEDGFGEENHVVLYIPKETQYKMSLLLEELGIEDRVLELFSSLLPSITSKRDSGLSKEKQVNLGKDKVLSFDTDLLQLKKAYKSGSLDLKIKADYTNSKDLKSLLANGSLVKSLLSVSVRGRLAVGEGDKVAIFDVGQLIGQATIAPINADKANVKPLSRNIVRFEIVHLSFNPVVENYLAVAGLEDCQILTLNHRGEVIDRLAVELALQGAFIRRIDWVPGSQVQLMVVTNKFVKIYDLSQDSISPTQYFTLPNDMIVDATLFVASRGRVFLLVLSEQGNLYRFELSWGGNAGATPLKEIVQIMGKDVTGKGSSVYFSPTYRLLFISYHDGSSFMGRLSSDATSLTDTSGMFEEESDCKQRVAGLHRWKELLAGSGLFICFSSVKSNAVLAVSLRGDGVCAQNLRHPTGSSSPMVGITAYKPLSKDNVHCLVLHDDGSLQIYSHVRSGVDTDSNFTAEKVKKLGSKILNNKTYAGAKPEFPLDFFERAFCITADVRLGSDAIRNGDSEGAKQSLASEDGFIESPSPVGFKISVSNPNPDIVMVGIRMHVGTTSASSIPSEVTIFQRSIKMDEGMRCWYDIPFTVAESLLADEDVVISVGPTTSGTALPRIDSLEVYGRAKDEFGWKEKMDAVLDMEARVLGHGLLLPGSSKKRALAQSASMEEQVIADGLKLLSIYYSVCRPRQEVVLSELKCKQLLETIFESDRETLLQTTACRVLQSVFPRKEIYYQVMFLPNSVKDTMRLLGVVKVTSILSSRLGILGTGGSIVEEFNAQMRAVSKVALTRKSNFSVFLEMNGSEVVDNLMQVLWGILESEPLDTPTMNNVVMSSVELIYSYAECLASQGKDTGVHSVAPAVQLLKALMLFPNESVQTSSRCVLVLAISSRLLQVPFPKQTMLTTDDLVDNVTTPSVPIRTAGGNTHVMIEEDSITSSVQYCCDGCSTVPILRRRWHCTVCPDFDLCEACYEVLDADRLPPPHTRDHPMTAIPIEVESLGADTNEIQFSADEVGISNMLPVVTSSIPQASTPSIHVLEPGESAEFSASLTDPISISASKRAVNSLILSEFLQELSGWMETVSGVQAIPVMQLFYRLSSAIGGAFMDSSKPEEISLDKLIKWLLGEINLSKPFAASTRSSLGEIVILVFMFFTLMLRSWHQPGSDGSSSKLGGSTDVHDRRIVQSSTVVATQSSLHVQERDDFASQLVRACSCLRNQEFVNYLMNILQQLVHVFKSRAANVEARGSSSGSGCGAMLTVRRDLPAGNYSPFFSDSYAKAHRADIFVDYHRLLLENVFRLVYTLVRPEKQEKMGEKEKVYRNASSKDLKLDGFQDVLCSYINNPHTAFVRRYARRLFLHLCGSKTQYYSVRDSWQFSNEVKNLYKHVEKSGGFENNVSYERSVKIVKSLSTIAEVAVARPRNWQKYCLRHGDFLSFLLNGVFHFAEESVIQTLKLLNLAFYQGKDVSSSVQKAEATEVVTGSNRSGSQSVDSKKKKKGEDGHDSGLEKLYVDMEGVVDIFSANCGDLLRQFIDFFLLEWNSSSVRTEAKSVIYGLWHHGRHSFKESLLAALLQKVRYLPAYGQNIVEYTELVSLLLDKAPENNSKQAINELVDRCLNPDVIRCFFETLHSQNELIANHPNSRIYSTLGNLVEFDGYYLESEPCVACSSPDVPYSKMKLESLKSETKFTDNRIIVKCTGSYTIQSVTMNVHDARKSKSVKVLNLYYNNRPVSDLSELKNNWSLWKRAKSCHLSFNQTELKVEFPIPITACNFMIELDSFYENLQALSLEPLQCPRCSRPVTDKHGICSNCHENAYQCRQCRNINYENLDSFLCNECGYSKYGRFEFNFMAKPSFIFDNMENDEDMKKGLAAIESESENAHKRYQQLLGFKKPLLKIVSSIGETEMDSQHKDTVQQMMASLPGPSCKINRKIALLGVLYGEKCKAAFDSVSKSVQTLQGLRRVLMSYLHQKNSNFSSGASRCVVSKTPNNCYGCATTFVTQCLEILQVLSKHPRSRKQLVAAGILSELFENNIHQGPKTARAQARAALSTFSEGDLSAVNELNNLVQKKIMYCLEHHRSMDIALATREEMLLLSEVCSLTDEFWESRLRLVFQLLFSSIKLGAKHPAISEHIILPCLKIISVACTPPKPDTAEKEQTMGKSAPAVQEKDENAAGVIKYSSESEENNLNVSQKTRDIQLVSYLEWEKGASYLDFVRRQYKASQSIRGASQKSRTHRSDFLALKYTLRWKRRSSRTSKGGLQAFELGSWVTELILSACSQSIRSEMCTLISLLAAQSSPRRYRLINLLIGLLPATLAAGESSAEYFELLFKMIETQDALLFLTVRGCLTTICKLISQEVGNIESLERSLQIDISQGFTLHKLLELLGKFLEVPNIRSRFMRDNLLSHVLEALIVIRGLIVQKTKLINDCNRRLKDLLDGLLLESSENKRQFIRACVSGLQTHAEENKGRTCLFILEQLCNLICPSKPEAVYMLILNKSHTQEEFIRGSMTKNPYSSAEIGPLMRDVKNKICQQLDLLGLLEDDYGMELLVAGNIISLDLSIAQVYELVWKKSNQSSTSLTNSALLASNAAPSRDCPPMTVTYRLQGLDGEATEPMIKELEEDREESQDPEIEFAIAGAVREYGGLEILLDMIKSLQDDFKSNQEEMVAVLDLLNHCCKIRENRRALLRLGALSLLLETARRAFSVDAMEPAEGILLIVESLTLEANESDSISAAQSALTVSNEETGTWEQAKKIVLMFLERLSHPSGLKKSNKQQRNTEMVARILPYLTYGEPAAMEALIEHFSPYLQNWSEFDQLQQRHEEDPKDDSIAQQAAKQRFTVENFVRVSESLKTSSCGERLKDIVLENGIIAVAVKHIKEIFAITGQTGFKSSKEWLLALKLPSVPLILSMLRGLSMGHLPTQTCIDEGGILTLLHALEGVSGENDIGARAENLLDTLADKEGKGDGFLGEKVRALRDATKDEMRRRALRKREELLQGLGMRQELSSDGGERIVVSQPILEGFEDVEEEEDGLACMVCREGYKLRPSDLLGVYSYSKRVNLGVGNSGSARGECVYTTVSYFNIIHFQCHQEAKRADAALKNPKKEWEGAMLRNNESLCNSLFPVKGPSVPLAQYLRYVDQYWDNLNALGRADGSRLRLLTYDIVLMLARFATGASFSADCRGGGRDSNSRFLPFMFQMARHLLDQGGPVQRTNMARSVSSYISSSSTSTATAPSSDSRPLTPGSQLSSTGTEETVQFMMVNSLLSESYESWLQHRRVFLQRGIYHTFMQHAHGRVASRAAEPTSSGGKTQDAETLTGDELLSIVKPMLVYTGMIEQLQQLFKPKKPVHIEPIKKEGTSSGVELEPWEIVMKEKLLNVKEMIGFSKELISWLDEINSATDLQEAFDIVGVLADVLSEGVTQCDQFVRSAIDKD.

The residue at position 2 (A2) is an N-acetylalanine. The next 2 helical transmembrane spans lie at 1150–1170 (AILLSCILSIRCIVLTINGLL) and 1458–1478 (LAAEEKLLPGLKFIFGVIGTL). Positions 1539–1549 (SVDEDEDDGTS) are enriched in acidic residues. Positions 1539 to 1562 (SVDEDEDDGTSDGEVASLDKEDEE) are disordered. The UBR-type zinc finger occupies 1573–1644 (KVCTFTSSGS…RGSSCQCLKP (72 aa)). The ZZ-type zinc-finger motif lies at 2613-2672 (SVQYCCDGCSTVPILRRRWHCTVCPDFDLCEACYEVLDADRLPPPHTRDHPMTAIPIEVE). Zn(2+) contacts are provided by C2618, C2621, C2633, C2636, C2642, C2645, H2658, and H2662. The chain crosses the membrane as a helical span at residues 2813–2833 (SSLGEIVILVFMFFTLMLRSW). A disordered region spans residues 3149–3174 (EVVTGSNRSGSQSVDSKKKKKGEDGH). Polar residues predominate over residues 3151–3162 (VTGSNRSGSQSV). The MYND-type; degenerate zinc-finger motif lies at 3464 to 3504 (CPRCSRPVTDKHGICSNCHENAYQCRQCRNINYENLDSFLC). Coiled-coil stretches lie at residues 3537 to 3557 (KKGLAAIESESENAHKRYQQL) and 4313 to 4333 (LEILLDMIKSLQDDFKSNQEE). Residues 4569 to 5098 (PSVPLILSML…QFVRSAIDKD (530 aa)) are UBR4 E3 catalytic module. A HemiRING-type zinc finger spans residues 4698–4817 (GLACMVCREG…WDNLNALGRA (120 aa)). Zn(2+)-binding residues include C4701, C4704, H4751, and C4754. The 279-residue stretch at 4820 to 5098 (SRLRLLTYDI…QFVRSAIDKD (279 aa)) folds into the UZI domain. Residues 4891-4903 (SSTSTATAPSSDS) show a composition bias toward low complexity. The interval 4891–4915 (SSTSTATAPSSDSRPLTPGSQLSST) is disordered.

It belongs to the UBR4 family. Constitutively expressed in roots, rosette leaves, inflorescence stems, and flowers. Present in inflorescence meristems, floral meristems and vascular tissues.

The protein localises to the membrane. Required for auxin efflux and polar auxin transport (PAT) influencing auxin-mediated developmental responses (e.g. cell elongation, apical dominance, lateral root production, inflorescence architecture, general growth and development). Controls the elongation of the pedicels and stem internodes through auxin action. Involved in the expression modulation of light-regulated genes. Represses CAB1 and CAB3 genes expression in etiolated seedlings. Confers sensitivity to the auxin transport inhibitors N-1-naphthylphthalamic acid (NPA), 2-carboxyphenyl-3-phenylpropane-l,2-dione (CPD), and methyl-2-chloro-9-hydroxyfluorene-9-carboxylate (CFM). Influences the polarized subcellular distribution of the auxin transporter PIN1 in response to auxin transport inhibitors. Plays a role in the regulation of responses to phytohormones such as auxin, cytokinins, ethylene and gibberellic acid (GA), particularly during light-mediated stimuli (e.g. shade ovoidance, etiolation). Required for pericycle cell activation to form lateral root primordia (LRP) in both high and low phosphate P conditions. Necessary for the plant-growth promotion and lateral root development mediated by the fungus Trichoderma virens. In Arabidopsis thaliana (Mouse-ear cress), this protein is Auxin transport protein BIG (BIG).